Here is a 389-residue protein sequence, read N- to C-terminus: Chalcone synthase 3 (389 aa).

The active site involves Cys-164.

It belongs to the thiolase-like superfamily. Chalcone/stilbene synthases family.

The catalysed reaction is (E)-4-coumaroyl-CoA + 3 malonyl-CoA + 3 H(+) = 2',4,4',6'-tetrahydroxychalcone + 3 CO2 + 4 CoA. The protein operates within secondary metabolite biosynthesis; flavonoid biosynthesis. Its function is as follows. The primary product of this enzyme is 4,2',4',6'-tetrahydroxychalcone (also termed naringenin-chalcone or chalcone) which can under specific conditions spontaneously isomerize into naringenin. This is Chalcone synthase 3 (CHS3) from Pisum sativum (Garden pea).